The sequence spans 181 residues: Large ribosomal subunit protein uL5 (181 aa).

It belongs to the universal ribosomal protein uL5 family. Part of the 50S ribosomal subunit; part of the 5S rRNA/L5/L18/L25 subcomplex. Contacts the 5S rRNA and the P site tRNA. Forms a bridge to the 30S subunit in the 70S ribosome.

In terms of biological role, this is one of the proteins that bind and probably mediate the attachment of the 5S RNA into the large ribosomal subunit, where it forms part of the central protuberance. In the 70S ribosome it contacts protein S13 of the 30S subunit (bridge B1b), connecting the 2 subunits; this bridge is implicated in subunit movement. Contacts the P site tRNA; the 5S rRNA and some of its associated proteins might help stabilize positioning of ribosome-bound tRNAs. This chain is Large ribosomal subunit protein uL5, found in Mesomycoplasma hyopneumoniae (strain 232) (Mycoplasma hyopneumoniae).